The primary structure comprises 222 residues: Thymidylate kinase (222 aa).

10–17 (GLEGAGKS) contributes to the ATP binding site.

The protein belongs to the thymidylate kinase family.

It catalyses the reaction dTMP + ATP = dTDP + ADP. Phosphorylation of dTMP to form dTDP in both de novo and salvage pathways of dTTP synthesis. This is Thymidylate kinase from Alteromonas mediterranea (strain DSM 17117 / CIP 110805 / LMG 28347 / Deep ecotype).